The following is a 198-amino-acid chain: Nucleoid occlusion factor SlmA (198 aa).

The 61-residue stretch at 10–70 folds into the HTH tetR-type domain; that stretch reads NRREEILQSL…SLIEFIEDSL (61 aa). A DNA-binding region (H-T-H motif) is located at residues 33-52; it reads TTAKLAASVGVSEAALYRHF. The stretch at 117–145 forms a coiled coil; it reads EQDKLQGRINQLFERIEAQLRQVLREKKM.

It belongs to the nucleoid occlusion factor SlmA family. Homodimer. Interacts with FtsZ.

The protein resides in the cytoplasm. It localises to the nucleoid. In terms of biological role, required for nucleoid occlusion (NO) phenomenon, which prevents Z-ring formation and cell division over the nucleoid. Acts as a DNA-associated cell division inhibitor that binds simultaneously chromosomal DNA and FtsZ, and disrupts the assembly of FtsZ polymers. SlmA-DNA-binding sequences (SBS) are dispersed on non-Ter regions of the chromosome, preventing FtsZ polymerization at these regions. The chain is Nucleoid occlusion factor SlmA from Enterobacter sp. (strain 638).